The following is a 671-amino-acid chain: NADPH--cytochrome P450 reductase (671 aa).

Residues 1–14 (MSAEHVEEVVSEEP) lie on the Lumenal side of the membrane. A helical membrane pass occupies residues 15–35 (FLGTLDIALLVVLLVGATWYF). Over 36–671 (MRSRKKEEAP…QKRYSADVWS (636 aa)) the chain is Cytoplasmic. The Flavodoxin-like domain maps to 77–221 (LVVFYGSQTG…DFITWKDRFW (145 aa)). FMN is bound by residues 83 to 88 (SQTGTA), 135 to 138 (ATYG), 170 to 179 (LGNKTYEHYN), and Asp205. One can recognise an FAD-binding FR-type domain in the interval 276-515 (KNPFLASVIV…FIRKSQFRLP (240 aa)). NADP(+) is bound at residue Arg295. FAD contacts are provided by residues 451–454 (RYYS), 469–471 (TAV), Tyr475, and 485–488 (GVAT). Residues Thr529, 589–590 (SR), 595–599 (KIYVT), and Asp632 each bind NADP(+). Trp670 serves as a coordination point for FAD.

It belongs to the NADPH--cytochrome P450 reductase family. The protein in the N-terminal section; belongs to the flavodoxin family. In the C-terminal section; belongs to the flavoprotein pyridine nucleotide cytochrome reductase family. The cofactor is FAD. It depends on FMN as a cofactor.

The protein resides in the endoplasmic reticulum membrane. The enzyme catalyses 2 oxidized [cytochrome P450] + NADPH = 2 reduced [cytochrome P450] + NADP(+) + H(+). Functionally, this enzyme is required for electron transfer from NADP to cytochrome P450 in microsomes. It can also provide electron transfer to heme oxygenase and cytochrome B5. The polypeptide is NADPH--cytochrome P450 reductase (Musca domestica (House fly)).